A 566-amino-acid polypeptide reads, in one-letter code: Type 3 secretion system secretin (566 aa).

The N-terminal stretch at 1 to 22 (MKKFNIKSLTLLIVLLPLIVNA) is a signal peptide.

The protein belongs to the bacterial secretin family. T3SS SctC subfamily. As to quaternary structure, the core secretion machinery of the T3SS is composed of approximately 20 different proteins, including cytoplasmic components, a base, an export apparatus and a needle. This subunit is part of the base, which anchors the injectisome in the bacterial cell envelope. Forms a stable homooligomeric complex. Interacts with the pilotin MxiM/SctG and the inner membrane ring outer protein MxiJ/SctJ.

It localises to the cell outer membrane. In terms of biological role, component of the type III secretion system (T3SS), also called injectisome, which is used to inject bacterial effector proteins into eukaryotic host cells. Forms a ring-shaped multimeric structure with an apparent central pore in the outer membrane. Necessary for the secretion of Ipa invasins. In Shigella flexneri, this protein is Type 3 secretion system secretin.